The primary structure comprises 269 residues: Indole-3-glycerol phosphate synthase (269 aa).

Belongs to the TrpC family.

It carries out the reaction 1-(2-carboxyphenylamino)-1-deoxy-D-ribulose 5-phosphate + H(+) = (1S,2R)-1-C-(indol-3-yl)glycerol 3-phosphate + CO2 + H2O. Its pathway is amino-acid biosynthesis; L-tryptophan biosynthesis; L-tryptophan from chorismate: step 4/5. The chain is Indole-3-glycerol phosphate synthase from Roseiflexus castenholzii (strain DSM 13941 / HLO8).